A 903-amino-acid chain; its full sequence is MAVPKMVFSDVESFLDSHPELFEDYLNRKGSSSMVEKWLKNHQAGKSEAEPKEEKSSVCKDSWASKCDGLQRRASQKELRKTFARSKAINVNRTYDEHVNSRAQEPLTSMRRRALLRKASSLPPTTAHILSALLESRVNIPQYPSTAVDFKYYLKEHNEREFFLELVKDISNDLDLTSLSYKILVFVCIMVDADRCSLFLVEGTGNKKTLVSKFFDVHAGTTVLPSMNSGEVQVPWGKGIIGYVAEHGETVNIPDAYQDRRFSDEIDKLTGYKTKSLLCMPIQNSDGEIIGVAQAINKSSSGELFTEDDEKVLQMYLPFCGIAISNAQLFAASRKEYDRSRALLEVVNDLFEEQTDLEKIVRKIMHRAQTLLKCERCSVQLLEDIESPVVKFTKSFELLSPKCSADAESSFKDSMEKSSYSDWLINNSIAELVASTGLPVNISDAYQDPRFDAEADQFSDFHIRSVLCVPIWNSNHQIIGVAQVLNRLDGKPFDDADQRLFEAFVIFCGLGINNTIMYDQVKKSWAKQSVALDVLSYHATCSKTEVDKFKAANIPLVCELGIDKLSFDDFSLDVDAMITAALRMFIELGMVQKFKIDYETLCRWLLTVRKNYRMVLYHNWRHAFNVCQCMFAMLTTAGFQETLTDVEILALIVGCVCHDLDHRGTNNAFQAKTGSALSLLYGTSATLEHHHFNHAVMILQSEGHNIFCNLSSTEYSDLMQLLKQSILATDLTLYFENRNSFFELVSIGEYNWNVKTHRDMCRSMMMTACDLGAVTKPWDISRKVAELVTSEFFEQGDRERSELKLTPSAIFDRNRKDELPGLQLEWIDGICAPLYETLVKLNPKLQPMVDMINANRVKWEELDKKRQHDHGASVPASPCSAAEGSETGGVPCCSNNTPPTHVS.

GAF domains lie at 175-324 (DLTS…GIAI) and 356-512 (DLEK…GLGI). Serine 378 serves as a coordination point for 3',5'-cyclic GMP. One can recognise a PDEase domain in the interval 542–866 (SKTEVDKFKA…VKWEELDKKR (325 aa)). The active-site Proton donor is histidine 618. 4 residues coordinate a divalent metal cation: histidine 622, histidine 658, aspartate 659, and aspartate 770. The tract at residues 863-903 (DKKRQHDHGASVPASPCSAAEGSETGGVPCCSNNTPPTHVS) is disordered. Residues 893–903 (CSNNTPPTHVS) show a composition bias toward polar residues.

The protein belongs to the cyclic nucleotide phosphodiesterase family. A divalent metal cation serves as cofactor.

It localises to the cytoplasm. It is found in the cytosol. It catalyses the reaction 3',5'-cyclic GMP + H2O = GMP + H(+). The enzyme catalyses 3',5'-cyclic AMP + H2O = AMP + H(+). Functionally, plays a role in signal transduction by regulating the intracellular concentration of cyclic nucleotides cAMP and cGMP. Catalyzes the hydrolysis of both cAMP and cGMP to 5'-AMP and 5'-GMP, respectively. This Takifugu rubripes (Japanese pufferfish) protein is Dual 3',5'-cyclic-AMP and -GMP phosphodiesterase 11A (pde11a).